Reading from the N-terminus, the 88-residue chain is MANTPSAKKAVRKIAARTEINKSRRSRVRTFVRKLEDALLSGDKQAAEVAFKAVEPELMRAASKGVVHKNTAARKVSRLAKRVKALNA.

The protein belongs to the bacterial ribosomal protein bS20 family.

In terms of biological role, binds directly to 16S ribosomal RNA. The sequence is that of Small ribosomal subunit protein bS20 from Brucella abortus (strain S19).